The sequence spans 517 residues: Crotonobetaine/carnitine--CoA ligase (517 aa).

The protein belongs to the ATP-dependent AMP-binding enzyme family.

The enzyme catalyses 4-(trimethylamino)butanoate + ATP + CoA = 4-(trimethylamino)butanoyl-CoA + AMP + diphosphate. It catalyses the reaction crotonobetaine + ATP + CoA = crotonobetainyl-CoA + AMP + diphosphate. It carries out the reaction (R)-carnitine + ATP + CoA = (R)-carnitinyl-CoA + AMP + diphosphate. It participates in amine and polyamine metabolism; carnitine metabolism. Its function is as follows. Catalyzes the transfer of CoA to carnitine, generating the initial carnitinyl-CoA needed for the CaiB reaction cycle. Also has activity toward crotonobetaine and gamma-butyrobetaine. This is Crotonobetaine/carnitine--CoA ligase from Shigella flexneri.